We begin with the raw amino-acid sequence, 208 residues long: RNA chaperone ProQ (208 aa).

The span at 106–127 (SKAKVATRRKEQAKKAREEAKA) shows a compositional bias: basic and acidic residues. The disordered stretch occupies residues 106–154 (SKAKVATRRKEQAKKAREEAKAKKTARAATPPKRRPQPAAKKVEQPVET).

It belongs to the ProQ family.

The protein resides in the cytoplasm. In terms of biological role, RNA chaperone with significant RNA binding, RNA strand exchange and RNA duplexing activities. This Aliivibrio fischeri (strain ATCC 700601 / ES114) (Vibrio fischeri) protein is RNA chaperone ProQ.